We begin with the raw amino-acid sequence, 107 residues long: Integration host factor subunit beta (107 aa).

Residues 54–107 form a disordered region; that stretch reads NRRPARVGRNPKSGEKVQVPEKHVPHFKPGKELRERVDGRAGEPLKNDEPEDGQ. Residues 65–101 show a composition bias toward basic and acidic residues; the sequence is KSGEKVQVPEKHVPHFKPGKELRERVDGRAGEPLKND.

The protein belongs to the bacterial histone-like protein family. In terms of assembly, heterodimer of an alpha and a beta chain.

In terms of biological role, this protein is one of the two subunits of integration host factor, a specific DNA-binding protein that functions in genetic recombination as well as in transcriptional and translational control. This is Integration host factor subunit beta from Burkholderia thailandensis (strain ATCC 700388 / DSM 13276 / CCUG 48851 / CIP 106301 / E264).